The following is a 157-amino-acid chain: Putative tRNA (cytidine(34)-2'-O)-methyltransferase (157 aa).

Residues isoleucine 79, glycine 104, and isoleucine 125 each coordinate S-adenosyl-L-methionine.

Belongs to the class IV-like SAM-binding methyltransferase superfamily. RNA methyltransferase TrmH family. TrmL subfamily.

It is found in the cytoplasm. It carries out the reaction cytidine(34) in tRNA + S-adenosyl-L-methionine = 2'-O-methylcytidine(34) in tRNA + S-adenosyl-L-homocysteine + H(+). The catalysed reaction is 5-carboxymethylaminomethyluridine(34) in tRNA(Leu) + S-adenosyl-L-methionine = 5-carboxymethylaminomethyl-2'-O-methyluridine(34) in tRNA(Leu) + S-adenosyl-L-homocysteine + H(+). Functionally, could methylate the ribose at the nucleotide 34 wobble position in tRNA. This is Putative tRNA (cytidine(34)-2'-O)-methyltransferase from Geobacillus stearothermophilus (Bacillus stearothermophilus).